The primary structure comprises 481 residues: Tryptophan biosynthesis protein TrpCF (481 aa).

Positions 1–283 (MKMTDFNTQQ…LAVRKVTLGE (283 aa)) are indole-3-glycerol phosphate synthase. The interval 284–481 (NKVCGLTHPD…QAAFHAIRNY (198 aa)) is N-(5'-phosphoribosyl)anthranilate isomerase.

The protein in the N-terminal section; belongs to the TrpC family. It in the C-terminal section; belongs to the TrpF family. In terms of assembly, monomer.

It catalyses the reaction N-(5-phospho-beta-D-ribosyl)anthranilate = 1-(2-carboxyphenylamino)-1-deoxy-D-ribulose 5-phosphate. The catalysed reaction is 1-(2-carboxyphenylamino)-1-deoxy-D-ribulose 5-phosphate + H(+) = (1S,2R)-1-C-(indol-3-yl)glycerol 3-phosphate + CO2 + H2O. Its pathway is amino-acid biosynthesis; L-tryptophan biosynthesis; L-tryptophan from chorismate: step 3/5. It functions in the pathway amino-acid biosynthesis; L-tryptophan biosynthesis; L-tryptophan from chorismate: step 4/5. Its function is as follows. Bifunctional enzyme that catalyzes two sequential steps of tryptophan biosynthetic pathway. The first reaction is catalyzed by the isomerase, coded by the TrpF domain; the second reaction is catalyzed by the synthase, coded by the TrpC domain. The sequence is that of Tryptophan biosynthesis protein TrpCF (trpC) from Vibrio parahaemolyticus serotype O3:K6 (strain RIMD 2210633).